The following is a 506-amino-acid chain: SPbeta prophage-derived uncharacterized protein YonE (506 aa).

Residues 473–506 (YTFTGNEVGRPNEGNKNNDNTVKSATSNGNDNPI) form a disordered region. The segment covering 486–506 (GNKNNDNTVKSATSNGNDNPI) has biased composition (polar residues).

This Bacillus subtilis (strain 168) protein is SPbeta prophage-derived uncharacterized protein YonE (yonE).